Consider the following 255-residue polypeptide: CD320 antigen (255 aa).

An N-terminal signal peptide occupies residues 1 to 29 (MNGWVARGLARRAAALGLGLRVLLCFGLC). The Extracellular segment spans residues 30–203 (LEIAPTPIQT…SVQSGNRNVY (174 aa)). LDL-receptor class A domains lie at 52–89 (SCPP…EECG) and 120–157 (SCPE…LGCG). Disulfide bonds link cysteine 53–cysteine 66, cysteine 60–cysteine 79, cysteine 73–cysteine 88, cysteine 121–cysteine 134, cysteine 128–cysteine 147, and cysteine 141–cysteine 156. Ca(2+) contacts are provided by tryptophan 71, aspartate 74, aspartate 76, aspartate 78, aspartate 84, and glutamate 85. Ca(2+)-binding residues include tryptophan 139, aspartate 142, histidine 144, aspartate 146, aspartate 152, and glutamate 153. Residues asparagine 177 and asparagine 183 are each glycosylated (N-linked (GlcNAc...) asparagine). Residues 204-224 (GIIAAVAVLSISLAAGILFAL) traverse the membrane as a helical segment. The Cytoplasmic portion of the chain corresponds to 225 to 255 (SRLCAQGCLAPLGLLVSMKGSLQPEKKTSVL).

Interacts (via LDL-receptor class A domains) with TCN2.

The protein localises to the cell membrane. In terms of biological role, receptor for transcobalamin saturated with cobalamin (TCbl). Plays an important role in cobalamin uptake. Plasma membrane protein that is expressed on follicular dendritic cells (FDC) and mediates interaction with germinal center B cells. Functions as a costimulator to promote B cell responses to antigenic stimuli; promotes B cell differentiation and proliferation. Germinal center-B (GC-B) cells differentiate into memory B-cells and plasma cells (PC) through interaction with T-cells and follicular dendritic cells (FDC). CD320 augments the proliferation of PC precursors generated by IL-10. The sequence is that of CD320 antigen (CD320) from Bos taurus (Bovine).